Here is a 606-residue protein sequence, read N- to C-terminus: Ubiquitin-like modifier-activating enzyme ATG7 (606 aa).

A GXGXXG motif motif is present at residues 316 to 321; that stretch reads GSGTLG. The Glycyl thioester intermediate role is filled by C488. The tract at residues 567–606 is homodimerization; it reads ALDDYKCVEKLSGLSKVQEEAELALEEDFDFSEDDEFVTG.

Belongs to the ATG7 family. In terms of assembly, homodimer. Interacts with ATG8 through a thioester bond between Cys-488 and the C-terminal Gly of ATG8 and with ATG12 through a thioester bond between Cys-488 and the C-terminal Gly of ATG12. Also interacts with ATG3.

The protein localises to the cytoplasm. Its subcellular location is the preautophagosomal structure. E1-like activating enzyme involved in the 2 ubiquitin-like systems required for cytoplasm to vacuole transport (Cvt) and autophagy. Activates ATG12 for its conjugation with ATG5 and ATG8 for its conjugation with phosphatidylethanolamine. Both systems are needed for the ATG8 association to Cvt vesicles and autophagosomes membranes. Autophagy is essential for maintenance of amino acid levels and protein synthesis under nitrogen starvation. Required for selective autophagic degradation of the nucleus (nucleophagy) as well as for mitophagy which contributes to regulate mitochondrial quantity and quality by eliminating the mitochondria to a basal level to fulfill cellular energy requirements and preventing excess ROS production. The polypeptide is Ubiquitin-like modifier-activating enzyme ATG7 (Kluyveromyces marxianus (strain DMKU3-1042 / BCC 29191 / NBRC 104275) (Yeast)).